Consider the following 262-residue polypeptide: Octopine permease ATP-binding protein P (262 aa).

The 246-residue stretch at 9–254 (VKLTGIRKNF…PRTERFRQFL (246 aa)) folds into the ABC transporter domain. 41 to 48 (GSSGSGKS) lines the ATP pocket.

This sequence belongs to the ABC transporter superfamily.

The protein resides in the cell inner membrane. Component of the octopine active transport system probably consisting of four subunits: Q, M, P and T. The protein is Octopine permease ATP-binding protein P (occP) of Rhizobium meliloti (Ensifer meliloti).